A 107-amino-acid chain; its full sequence is Replication initiation control protein YabA (107 aa).

His-81, Cys-83, Cys-97, and Cys-100 together coordinate Zn(2+).

Belongs to the YabA family. Homotetramer. Interacts with both DnaA and DnaN, acting as a bridge between these two proteins. Requires Zn(2+) as cofactor.

The protein resides in the cytoplasm. The protein localises to the nucleoid. Involved in control of chromosome replication initiation. Inhibits the cooperative binding of DnaA to the oriC region, thus negatively regulating initiation of chromosome replication. Inhibits the ability of DnaA-ATP to form a helix on DNA; does not disassemble preformed DnaA-DNA helices. Decreases the residence time of DnaA on the chromosome at its binding sites (oriC, replication forks and promoter-binding sites). Tethers DnaA to the replication machinery via the DNA polymerase beta sliding clamp subunit (dnaN). Associates with oriC and other DnaA targets on the chromosome in a DnaA-dependent manner. The chain is Replication initiation control protein YabA from Streptococcus pyogenes serotype M3 (strain ATCC BAA-595 / MGAS315).